Consider the following 216-residue polypeptide: Probable nicotinate-nucleotide adenylyltransferase (216 aa).

This sequence belongs to the NadD family.

The enzyme catalyses nicotinate beta-D-ribonucleotide + ATP + H(+) = deamido-NAD(+) + diphosphate. The protein operates within cofactor biosynthesis; NAD(+) biosynthesis; deamido-NAD(+) from nicotinate D-ribonucleotide: step 1/1. In terms of biological role, catalyzes the reversible adenylation of nicotinate mononucleotide (NaMN) to nicotinic acid adenine dinucleotide (NaAD). The chain is Probable nicotinate-nucleotide adenylyltransferase from Maridesulfovibrio salexigens (strain ATCC 14822 / DSM 2638 / NCIMB 8403 / VKM B-1763) (Desulfovibrio salexigens).